A 163-amino-acid polypeptide reads, in one-letter code: ATP synthase subunit b 1 (163 aa).

The helical transmembrane segment at 6-26 (LAELWVAVAFLLFVGILIYVG) threads the bilayer.

This sequence belongs to the ATPase B chain family. In terms of assembly, F-type ATPases have 2 components, F(1) - the catalytic core - and F(0) - the membrane proton channel. F(1) has five subunits: alpha(3), beta(3), gamma(1), delta(1), epsilon(1). F(0) has three main subunits: a(1), b(2) and c(10-14). The alpha and beta chains form an alternating ring which encloses part of the gamma chain. F(1) is attached to F(0) by a central stalk formed by the gamma and epsilon chains, while a peripheral stalk is formed by the delta and b chains.

It localises to the cell inner membrane. F(1)F(0) ATP synthase produces ATP from ADP in the presence of a proton or sodium gradient. F-type ATPases consist of two structural domains, F(1) containing the extramembraneous catalytic core and F(0) containing the membrane proton channel, linked together by a central stalk and a peripheral stalk. During catalysis, ATP synthesis in the catalytic domain of F(1) is coupled via a rotary mechanism of the central stalk subunits to proton translocation. In terms of biological role, component of the F(0) channel, it forms part of the peripheral stalk, linking F(1) to F(0). The sequence is that of ATP synthase subunit b 1 from Xanthobacter autotrophicus (strain ATCC BAA-1158 / Py2).